Consider the following 344-residue polypeptide: Sulfate/thiosulfate import ATP-binding protein CysA (344 aa).

The ABC transporter domain maps to Ile9–Ile239. Residue Gly41 to Ser48 participates in ATP binding.

Belongs to the ABC transporter superfamily. Sulfate/tungstate importer (TC 3.A.1.6) family. The complex is composed of two ATP-binding proteins (CysA), two transmembrane proteins (CysT and CysW) and a solute-binding protein (CysP).

Its subcellular location is the cell inner membrane. The enzyme catalyses sulfate(out) + ATP + H2O = sulfate(in) + ADP + phosphate + H(+). It carries out the reaction thiosulfate(out) + ATP + H2O = thiosulfate(in) + ADP + phosphate + H(+). Functionally, part of the ABC transporter complex CysAWTP involved in sulfate/thiosulfate import. Responsible for energy coupling to the transport system. The protein is Sulfate/thiosulfate import ATP-binding protein CysA of Synechococcus elongatus (strain ATCC 33912 / PCC 7942 / FACHB-805) (Anacystis nidulans R2).